A 491-amino-acid polypeptide reads, in one-letter code: Probable V-type proton ATPase subunit B 1 (491 aa).

Position 380 (arginine 380) interacts with ATP.

It belongs to the ATPase alpha/beta chains family. As to quaternary structure, V-ATPase is a heteromultimeric enzyme made up of two complexes: the ATP-hydrolytic V1 complex and the proton translocation V0 complex. The V1 complex consists of three catalytic AB heterodimers that form a heterohexamer, three peripheral stalks each consisting of EG heterodimers, one central rotor including subunits D and F, and the regulatory subunits C and H. The proton translocation complex V0 consists of the proton transport subunit a, a ring of proteolipid subunits c9c'', rotary subunit d, subunits e and f, and the accessory subunits vah-19/Ac45 and vah-20/PRR.

Non-catalytic subunit of the V1 complex of vacuolar(H+)-ATPase (V-ATPase), a multisubunit enzyme composed of a peripheral complex (V1) that hydrolyzes ATP and a membrane integral complex (V0) that translocates protons. V-ATPase is responsible for acidifying and maintaining the pH of intracellular compartments and in some cell types, is targeted to the plasma membrane, where it is responsible for acidifying the extracellular environment. Essential for the proper assembly and activity of V-ATPase. Required maternally for early embryogenesis and zygotically during morphogenesis. Specifically, involved in the clearance of apoptotic cell corpses in embryos. Also, during embryonic development, the V-ATPase is required to repress fusion of epidermal cells probably by negatively regulating eff-1-mediated cell fusion. In neurons, required for necrotic cell death by promoting intracellular acidification. Required for cell death induced by hypoxia. Required for acidification of synaptic vesicles and the release of neurotransmitters from adult neurons. This chain is Probable V-type proton ATPase subunit B 1, found in Caenorhabditis briggsae.